A 517-amino-acid polypeptide reads, in one-letter code: Protein disulfide isomerase-like 1-2 (517 aa).

Residues 1–23 (MAVNLVLSFALAILISSSPTAVG) form the signal peptide. The region spanning 24–143 (VDATEELKEA…IVEYLKRQVG (120 aa)) is the Thioredoxin 1 domain. Asparagine 41 carries an N-linked (GlcNAc...) asparagine glycan. Active-site nucleophile residues include cysteine 61 and cysteine 64. Cysteine 61 and cysteine 64 form a disulfide bridge. The N-linked (GlcNAc...) asparagine glycan is linked to asparagine 301. The region spanning 357–484 (VEYGNLTPYV…IISFINENRG (128 aa)) is the Thioredoxin 2 domain. Active-site nucleophile residues include cysteine 407 and cysteine 410. Residues cysteine 407 and cysteine 410 are joined by a disulfide bond. A Prevents secretion from ER motif is present at residues 514–517 (KDEL).

The protein belongs to the protein disulfide isomerase family.

It is found in the endoplasmic reticulum lumen. It catalyses the reaction Catalyzes the rearrangement of -S-S- bonds in proteins.. Functionally, acts as a protein-folding catalyst that interacts with nascent polypeptides to catalyze the formation, isomerization, and reduction or oxidation of disulfide bonds. May play a role in storage protein biogenesis. This is Protein disulfide isomerase-like 1-2 (PDIL1-2) from Oryza sativa subsp. japonica (Rice).